The chain runs to 760 residues: MRYNQFSYIPTSLERAAEELKELGFDLDLQKTAKASLESFLRKLFFHYPDSDYPLSHLIAKNDMDALSFFQSEQELSKEVFDLLALQVLGFIPGVDFTEADAFLDKLAFPIHFDETEIIKHIHHLLATRCKSGMTLIDDLVSQGMLTMDNDYHFFNGKSLATFDTSQLIREVVYVEAPLDTDQDGQLDLIKVNIIRPQSQKPLPTLMTPSPYHQGINEVANDKKLYRMEKELVVKKRRQITVEDRDFIPLETQPCKLPIGQNLESFSYINSYSLNDYFLARGFANIYVSGVGTAGSTGFMTSGNYAQIESFKAVIDWLNGRATAYTSHSKTHQVRADWANGLVCTTGKSYLGTMSTGLATTGVDGLAMIIAESAISSWYNYYRENGLVCSPGGYPGEDLDVLTELTYSRNLLAGDYLRHNDRYQELLNQQSQALDRQSGDYNQFWHDRNYLKNAHQIKCDVVYTHGLQDWNVKPRQVYEIFNALPSTINKHLFLHQGEHVYMHNWQSIDFRESMNALLCQKLLGLANDFSLPEMIWQDNTCPQNWQERKVFGTSTIKELDLGQELLLIDNHYGEDEFKAYGKDFRAFKAALFKGKANQALIDILLEEDLPINGEIVLQLKVKSSENKGLLSAQILDYGKKKRLGDLPIALTQSSIDNGQNFSREPLKELPFREDSYRVISKGFMNLQNRNNLSSIETIPNNKWMTVRLPLQPTIYHLEKGDTLRVILYTTDFEHTVRDNSNYALTIDLSQSQLIVPIASN.

Residues S349, D469, and H499 each act as charge relay system in the active site.

The protein belongs to the peptidase S15 family. As to quaternary structure, homodimer.

The protein resides in the cytoplasm. It carries out the reaction Hydrolyzes Xaa-Pro-|- bonds to release unblocked, N-terminal dipeptides from substrates including Ala-Pro-|-p-nitroanilide and (sequentially) Tyr-Pro-|-Phe-Pro-|-Gly-Pro-|-Ile.. In terms of biological role, removes N-terminal dipeptides sequentially from polypeptides having unsubstituted N-termini provided that the penultimate residue is proline. This Streptococcus pyogenes serotype M1 protein is Xaa-Pro dipeptidyl-peptidase.